Reading from the N-terminus, the 609-residue chain is Spore-specific protein YSW1 (609 aa).

Residues 1–24 form a disordered region; it reads MSSLADTVEGSEAKRGRFSNNALT. Residues Ser-159 and Ser-160 each carry the phosphoserine modification. Residues 162-225 form a disordered region; that stretch reads DENESHFTDA…DDEFSPATPP (64 aa). The span at 169 to 179 shows a compositional bias: polar residues; the sequence is TDANSHVMQSK. The span at 200 to 209 shows a compositional bias: basic and acidic residues; it reads LKKEYEKSFE. Residues 210 to 219 are compositionally biased toward acidic residues; the sequence is EYSDDSDDEF.

In Saccharomyces cerevisiae (strain ATCC 204508 / S288c) (Baker's yeast), this protein is Spore-specific protein YSW1 (YSW1).